Here is a 381-residue protein sequence, read N- to C-terminus: Tryptophan--tRNA ligase (381 aa).

The short motif at 82 to 90 (PSLGMHIGH) is the 'HIGH' region element. The short motif at 254–258 (KMSSS) is the 'KMSKS' region element.

This sequence belongs to the class-I aminoacyl-tRNA synthetase family.

The protein localises to the cytoplasm. It carries out the reaction tRNA(Trp) + L-tryptophan + ATP = L-tryptophyl-tRNA(Trp) + AMP + diphosphate + H(+). In Sulfolobus acidocaldarius (strain ATCC 33909 / DSM 639 / JCM 8929 / NBRC 15157 / NCIMB 11770), this protein is Tryptophan--tRNA ligase.